The following is a 124-amino-acid chain: Small ribosomal subunit protein uS12 (124 aa).

A 3-methylthioaspartic acid modification is found at aspartate 89.

The protein belongs to the universal ribosomal protein uS12 family. As to quaternary structure, part of the 30S ribosomal subunit. Contacts proteins S8 and S17. May interact with IF1 in the 30S initiation complex.

In terms of biological role, with S4 and S5 plays an important role in translational accuracy. Interacts with and stabilizes bases of the 16S rRNA that are involved in tRNA selection in the A site and with the mRNA backbone. Located at the interface of the 30S and 50S subunits, it traverses the body of the 30S subunit contacting proteins on the other side and probably holding the rRNA structure together. The combined cluster of proteins S8, S12 and S17 appears to hold together the shoulder and platform of the 30S subunit. The chain is Small ribosomal subunit protein uS12 from Yersinia enterocolitica serotype O:8 / biotype 1B (strain NCTC 13174 / 8081).